The following is a 1363-amino-acid chain: MQRGAALCLRLWLCLGLLDGLVSGYSMTPPTLNITEESHVIDTGDSLSISCRGQHPLEWAWPGAQEAPATGDKDSEDTGVVRDCEGTDARPYCKVLLLHEVHANDTGSYVCYYKYIKARIEGTTAASSYVFVRDFEQPFINKPDTLLVNRKDAMWVPCLVSIPGLNVTLRSQSSVLWPDGQEVVWDDRRGMLVSTPLLHDALYLQCETTWGDQDFLSNPFLVHITGNELYDIQLLPRKSLELLVGEKLVLNCTVWAEFNSGVTFDWDYPGKQAERGKWVPERRSQQTHTELSSILTIHNVSQHDLGSYVCKANNGIQRFRESTEVIVHENPFISVEWLKGPILEATAGDELVKLPVKLAAYPPPEFQWYKDGKALSGRHSPHALVLKEVTEASTGTYTLALWNSAAGLRRNISLELVVNVPPQIHEKEASSPSIYSRHSRQALTCTAYGVPLPLSIQWHWRPWTPCKMFAQRSLRRRQQQDLMPQCRDWRAVTTQDAVNPIESLDTWTEFVEGKNKTVSKLVIQNANVSAMYKCVVSNKVGQDERLIYFYVTTIPDGFTIESKPSEELLEGQPVLLSCQADSYKYEHLRWYRLNLSTLHDAHGNPLLLDCKNVHLFATPLAASLEEVAPGARHATLSLSIPRVAPEHEGHYVCEVQDRRSHDKHCHKKYLSVQALEAPRLTQNLTDLLVNVSDSLEMQCLVAGAHAPSIVWYKDERLLEEKSGVDLADSNQKLSIQRVREEDAGRYLCSVCNAKGCVNSSASVAVEGSEDKGSMEIVILVGTGVIAVFFWVLLLLIFCNMRRPAHADIKTGYLSIIMDPGEVPLEEQCEYLSYDASQWEFPRERLHLGRVLGYGAFGKVVEASAFGIHKGSSCDTVAVKMLKEGATASEHRALMSELKILIHIGNHLNVVNLLGACTKPQGPLMVIVEFCKYGNLSNFLRAKRDAFSPCAEKSPEQRGRFRAMVELARLDRRRPGSSDRVLFARFSKTEGGARRASPDQEAEDLWLSPLTMEDLVCYSFQVARGMEFLASRKCIHRDLAARNILLSESDVVKICDFGLARDIYKDPDYVRKGSARLPLKWMAPESIFDKVYTTQSDVWSFGVLLWEIFSLGASPYPGVQINEEFCQRLRDGTRMRAPELATPAIRRIMLNCWSGDPKARPAFSELVEILGDLLQGRGLQEEEEVCMAPRSSQSSEEGSFSQVSTMALHIAQADAEDSPPSLQRHSLAARYYNWVSFPGCLARGAETRGSSRMKTFEEFPMTPTTYKGSVDNQTDSGMVLASEEFEQIESRHRQESGFSCKGPGQNVAVTRAHPDSQGRRRRPERGARGGQVFYNSEYGELSEPSEEDHCSPSARVTFFTDNSY.

The first 24 residues, 1–24 (MQRGAALCLRLWLCLGLLDGLVSG), serve as a signal peptide directing secretion. The Extracellular portion of the chain corresponds to 25 to 775 (YSMTPPTLNI…EGSEDKGSME (751 aa)). Ig-like C2-type domains lie at 30–127 (PTLN…TAAS), 151–213 (KDAM…WGDQ), 219–326 (PFLV…TEVI), 331–415 (PFIS…ISLE), 422–552 (PQIH…FYVT), 555–671 (PDGF…KYLS), and 678–764 (PRLT…ASVA). 6 N-linked (GlcNAc...) asparagine glycosylation sites follow: Asn33, Asn104, Asn166, Asn251, Asn299, and Asn411. 2 cysteine pairs are disulfide-bonded: Cys51-Cys111 and Cys158-Cys206. Cys252 and Cys310 are disulfide-bonded. Intrachain disulfides connect Cys445–Cys534, Cys466–Cys486, and Cys578–Cys653. N-linked (GlcNAc...) asparagine glycosylation is found at Asn515, Asn527, Asn594, Asn683, and Asn690. A disulfide bond links Cys699 and Cys751. Residue Asn758 is glycosylated (N-linked (GlcNAc...) asparagine). The chain crosses the membrane as a helical span at residues 776–796 (IVILVGTGVIAVFFWVLLLLI). At 797–1363 (FCNMRRPAHA…RVTFFTDNSY (567 aa)) the chain is on the cytoplasmic side. Phosphotyrosine; by SRC occurs at positions 830, 833, and 853. Positions 845–1173 (LHLGRVLGYG…ELVEILGDLL (329 aa)) constitute a Protein kinase domain. ATP contacts are provided by residues 851–859 (LGYGAFGKV) and Lys879. The active-site Proton acceptor is Asp1037. Tyr1063 bears the Phosphotyrosine; by autocatalysis and SRC mark. Phosphotyrosine; by autocatalysis is present on residues Tyr1068, Tyr1230, Tyr1231, and Tyr1265. The tract at residues 1291–1331 (HRQESGFSCKGPGQNVAVTRAHPDSQGRRRRPERGARGGQV) is disordered. Tyr1333 and Tyr1337 each carry phosphotyrosine; by autocatalysis and SRC. A Phosphotyrosine; by autocatalysis modification is found at Tyr1363.

The protein belongs to the protein kinase superfamily. Tyr protein kinase family. CSF-1/PDGF receptor subfamily. Interacts with VEGFC and VEGFD. Monomer in the absence of bound VEGFC or VEGFD. Homodimer in the presence of bound VEGFC or VEGFD. Can also form a heterodimer with KDR. Interacts with PTPN14; the interaction is enhanced by stimulation with VEGFC. Interacts with CRK, GRB2, PTK2/FAK1, SHC1, PIK3R1 and PTPN11/SHP-2. Identified in a complex with SRC and ITGB1. Autophosphorylated on tyrosine residues upon ligand binding. Autophosphorylation occurs in trans, i.e. one subunit of the dimeric receptor phosphorylates tyrosine residues on the other subunit. Phosphorylation in response to H(2)O(2) is mediated by a process that requires SRC and PRKCD activity. Phosphorylation at Tyr-1068 is required for autophosphorylation at additional tyrosine residues. Phosphorylation at Tyr-1063 and Tyr-1337 is important for interaction with CRK and subsequent activation of MAPK8. Phosphorylation at Tyr-1230, Tyr-1231 and Tyr-1337 is important for interaction with GRB2 and subsequent activation of the AKT1 and MAPK1/ERK2 and/or MAPK3/ERK1 signaling pathways. In response to endothelial cell adhesion onto collagen, can also be phosphorylated in the absence of FLT4 kinase activity by SRC at Tyr-830, Tyr-833, Tyr-853, Tyr-1063, Tyr-1333, and Tyr-1337. In terms of tissue distribution, detected in endothelial cells (at protein level). Widely expressed. Detected in fetal spleen, lung and brain. Detected in adult liver, muscle, thymus, placenta, lung, testis, ovary, prostate, heart, and kidney.

The protein resides in the cell membrane. The protein localises to the cytoplasm. It localises to the nucleus. It is found in the secreted. The enzyme catalyses L-tyrosyl-[protein] + ATP = O-phospho-L-tyrosyl-[protein] + ADP + H(+). With respect to regulation, present in an inactive conformation in the absence of bound ligand. Binding of VEGFC or VEGFD leads to dimerization and activation by autophosphorylation on tyrosine residues. Inhibited by MAZ51. Tyrosine-protein kinase that acts as a cell-surface receptor for VEGFC and VEGFD, and plays an essential role in adult lymphangiogenesis and in the development of the vascular network and the cardiovascular system during embryonic development. Promotes proliferation, survival and migration of endothelial cells, and regulates angiogenic sprouting. Signaling by activated FLT4 leads to enhanced production of VEGFC, and to a lesser degree VEGFA, thereby creating a positive feedback loop that enhances FLT4 signaling. Modulates KDR signaling by forming heterodimers. The secreted isoform 3 may function as a decoy receptor for VEGFC and/or VEGFD and play an important role as a negative regulator of VEGFC-mediated lymphangiogenesis and angiogenesis. Binding of vascular growth factors to isoform 1 or isoform 2 leads to the activation of several signaling cascades; isoform 2 seems to be less efficient in signal transduction, because it has a truncated C-terminus and therefore lacks several phosphorylation sites. Mediates activation of the MAPK1/ERK2, MAPK3/ERK1 signaling pathway, of MAPK8 and the JUN signaling pathway, and of the AKT1 signaling pathway. Phosphorylates SHC1. Mediates phosphorylation of PIK3R1, the regulatory subunit of phosphatidylinositol 3-kinase. Promotes phosphorylation of MAPK8 at 'Thr-183' and 'Tyr-185', and of AKT1 at 'Ser-473'. The chain is Vascular endothelial growth factor receptor 3 (FLT4) from Homo sapiens (Human).